We begin with the raw amino-acid sequence, 434 residues long: Histidinol dehydrogenase (434 aa).

NAD(+)-binding residues include Y130, Q188, and N211. Substrate is bound by residues S237, Q259, and H262. Zn(2+) contacts are provided by Q259 and H262. Residues E326 and H327 each act as proton acceptor in the active site. H327, D360, E414, and H419 together coordinate substrate. Position 360 (D360) interacts with Zn(2+). Residue H419 participates in Zn(2+) binding.

Belongs to the histidinol dehydrogenase family. Homodimer. The cofactor is Zn(2+).

The catalysed reaction is L-histidinol + 2 NAD(+) + H2O = L-histidine + 2 NADH + 3 H(+). The protein operates within amino-acid biosynthesis; L-histidine biosynthesis; L-histidine from 5-phospho-alpha-D-ribose 1-diphosphate: step 9/9. In terms of biological role, catalyzes the sequential NAD-dependent oxidations of L-histidinol to L-histidinaldehyde and then to L-histidine. The polypeptide is Histidinol dehydrogenase (Salmonella paratyphi A (strain ATCC 9150 / SARB42)).